The primary structure comprises 191 residues: Peptidyl-tRNA hydrolase (191 aa).

Tyr-17 is a tRNA binding site. The active-site Proton acceptor is the His-22. TRNA is bound by residues Tyr-68, Asn-70, and Asn-116.

This sequence belongs to the PTH family. In terms of assembly, monomer.

The protein resides in the cytoplasm. The enzyme catalyses an N-acyl-L-alpha-aminoacyl-tRNA + H2O = an N-acyl-L-amino acid + a tRNA + H(+). Functionally, hydrolyzes ribosome-free peptidyl-tRNAs (with 1 or more amino acids incorporated), which drop off the ribosome during protein synthesis, or as a result of ribosome stalling. Catalyzes the release of premature peptidyl moieties from peptidyl-tRNA molecules trapped in stalled 50S ribosomal subunits, and thus maintains levels of free tRNAs and 50S ribosomes. In Mycobacterium tuberculosis (strain ATCC 25177 / H37Ra), this protein is Peptidyl-tRNA hydrolase.